The sequence spans 231 residues: tRNA (guanine-N(7)-)-methyltransferase (231 aa).

4 residues coordinate S-adenosyl-L-methionine: Glu62, Glu87, Asp114, and Asp136. Asp136 is a catalytic residue. Residues Lys140, Asp172, and Thr210 to Glu213 contribute to the substrate site.

It belongs to the class I-like SAM-binding methyltransferase superfamily. TrmB family.

It catalyses the reaction guanosine(46) in tRNA + S-adenosyl-L-methionine = N(7)-methylguanosine(46) in tRNA + S-adenosyl-L-homocysteine. Its pathway is tRNA modification; N(7)-methylguanine-tRNA biosynthesis. In terms of biological role, catalyzes the formation of N(7)-methylguanine at position 46 (m7G46) in tRNA. The protein is tRNA (guanine-N(7)-)-methyltransferase of Zymomonas mobilis subsp. mobilis (strain ATCC 31821 / ZM4 / CP4).